Reading from the N-terminus, the 195-residue chain is Putative manganese efflux pump MntP (195 aa).

Helical transmembrane passes span 3–23, 40–60, 68–88, 106–126, 132–152, and 165–185; these read LSAT…ASVG, GLIF…LGLL, WDHW…VLAG, VLIA…VGLA, ILHA…IGML, and AEII…YSHI.

Belongs to the MntP (TC 9.B.29) family.

Its subcellular location is the cell inner membrane. Functionally, probably functions as a manganese efflux pump. The protein is Putative manganese efflux pump MntP of Sodalis glossinidius (strain morsitans).